A 514-amino-acid chain; its full sequence is Major facilitator superfamily domain-containing protein 4A (514 aa).

5 helical membrane-spanning segments follow: residues 19-39 (LTYW…GPTL), 53-73 (ISWV…LGGV), 82-102 (LWAL…IPFC), 107-127 (VLAS…TVAN), and 139-159 (AVFL…SPLI). N-linked (GlcNAc...) asparagine glycosylation occurs at N177. The next 7 membrane-spanning stretches (helical) occupy residues 221 to 241 (YAFW…LMLL), 307 to 327 (FFAI…LTGA), 347 to 367 (VAGY…LLSI), 376 to 396 (ATMV…LLIF), 400 to 420 (VVFL…TFPS), 438 to 458 (VLVT…GSIF), and 466 to 486 (FLVC…LLLF).

The protein belongs to the major facilitator superfamily.

The protein resides in the membrane. The protein is Major facilitator superfamily domain-containing protein 4A of Homo sapiens (Human).